Consider the following 146-residue polypeptide: Transmembrane protein 207 (146 aa).

An N-terminal signal peptide occupies residues 1–29; that stretch reads MSRSRLFSVTSAISTIGILCLPLFQLVLS. The chain crosses the membrane as a helical span at residues 52-72; that stretch reads IWILLLLVLVAALLCGAVVLC.

Interacts with WWOX. As to expression, expressed in some signet-ring cell carcinoma, especially those showing high invasion and metastatic activity (at protein level).

Its subcellular location is the membrane. This is Transmembrane protein 207 (TMEM207) from Homo sapiens (Human).